We begin with the raw amino-acid sequence, 231 residues long: Sugar fermentation stimulation protein homolog (231 aa).

The protein belongs to the SfsA family.

This Geotalea daltonii (strain DSM 22248 / JCM 15807 / FRC-32) (Geobacter daltonii) protein is Sugar fermentation stimulation protein homolog.